Here is a 38-residue protein sequence, read N- to C-terminus: Large ribosomal subunit protein bL36 (38 aa).

It belongs to the bacterial ribosomal protein bL36 family.

In Buchnera aphidicola subsp. Schizaphis graminum (strain Sg), this protein is Large ribosomal subunit protein bL36.